Consider the following 504-residue polypeptide: ATP synthase subunit alpha (504 aa).

170–177 (GDRQTGKT) contributes to the ATP binding site.

This sequence belongs to the ATPase alpha/beta chains family. As to quaternary structure, F-type ATPases have 2 components, CF(1) - the catalytic core - and CF(0) - the membrane proton channel. CF(1) has five subunits: alpha(3), beta(3), gamma(1), delta(1), epsilon(1). CF(0) has four main subunits: a, b, b' and c.

It localises to the cellular thylakoid membrane. It carries out the reaction ATP + H2O + 4 H(+)(in) = ADP + phosphate + 5 H(+)(out). In terms of biological role, produces ATP from ADP in the presence of a proton gradient across the membrane. The alpha chain is a regulatory subunit. The polypeptide is ATP synthase subunit alpha (Prochlorococcus marinus (strain MIT 9211)).